We begin with the raw amino-acid sequence, 548 residues long: Ankyrin repeat domain-containing protein SOWAHA (548 aa).

The signal sequence occupies residues 1–19 (MALAAAAAAAAAAAGVSQA). The segment at 114 to 212 (EDNCAPGAPH…PPTAQVPPQK (99 aa)) is disordered. Residues 136–153 (SAPSELQHTPETLPSEVT) show a composition bias toward polar residues. A compositionally biased stretch (pro residues) spans 198 to 212 (GPEPAPPTAQVPPQK). At serine 258 the chain carries Phosphoserine. 2 ANK repeats span residues 344–373 (SGFT…RGGA) and 383–413 (GGYT…QVHV). The disordered stretch occupies residues 512-548 (PRKKTKIRGGLPSFTEISHRSTPGPLAGLVPSLPPPT).

It belongs to the SOWAH family.

This Mus musculus (Mouse) protein is Ankyrin repeat domain-containing protein SOWAHA (Sowaha).